A 242-amino-acid chain; its full sequence is Haloacid dehalogenase-like hydrolase domain-containing protein 3 (242 aa).

This sequence belongs to the HAD-like hydrolase superfamily.

The chain is Haloacid dehalogenase-like hydrolase domain-containing protein 3 (hdhd3) from Danio rerio (Zebrafish).